We begin with the raw amino-acid sequence, 297 residues long: Putative S-adenosyl-L-methionine-dependent methyltransferase Mjls_1072 (297 aa).

S-adenosyl-L-methionine contacts are provided by residues aspartate 124 and 153 to 154 (DL).

It belongs to the UPF0677 family.

Its function is as follows. Exhibits S-adenosyl-L-methionine-dependent methyltransferase activity. This is Putative S-adenosyl-L-methionine-dependent methyltransferase Mjls_1072 from Mycobacterium sp. (strain JLS).